The sequence spans 351 residues: Dysbindin (351 aa).

Residues 106–179 (FLADLECLTA…AELDAEHAQK (74 aa)) are a coiled coil. The disordered stretch occupies residues 291–325 (RHKLSSLSSTCTDSASQEASEGESPVVQSDEEEVQ). Over residues 295 to 306 (SSLSSTCTDSAS) the composition is skewed to low complexity.

Belongs to the dysbindin family. As to quaternary structure, component of the biogenesis of lysosome-related organelles complex 1 (BLOC-1).

The protein localises to the cytoplasm. It localises to the cytoplasmic vesicle membrane. The protein resides in the cytoplasmic vesicle. Its subcellular location is the secretory vesicle. It is found in the synaptic vesicle membrane. The protein localises to the endosome membrane. It localises to the melanosome membrane. The protein resides in the nucleus. Its subcellular location is the postsynaptic density. It is found in the endoplasmic reticulum. In terms of biological role, component of the BLOC-1 complex, a complex that is required for normal biogenesis of lysosome-related organelles (LRO), such as platelet dense granules and melanosomes. Plays a role in intracellular vesicle trafficking. Plays a role in synaptic vesicle trafficking and in neurotransmitter release. May be required for normal dopamine homeostasis in the cerebral cortex, hippocampus, and hypothalamus. Plays a role in the regulation of cell surface exposure of DRD2. Contributes to the regulation of dopamine signaling. May play a role in actin cytoskeleton reorganization and neurite outgrowth. In Gallus gallus (Chicken), this protein is Dysbindin (DTNBP1).